Reading from the N-terminus, the 346-residue chain is Methylthioribose-1-phosphate isomerase (346 aa).

Residues Arg-46–Ala-48, Arg-89, and Gln-196 each bind substrate. The active-site Proton donor is the Asp-237. Position 247–248 (Asn-247–Lys-248) interacts with substrate.

Belongs to the eIF-2B alpha/beta/delta subunits family. MtnA subfamily.

The enzyme catalyses 5-(methylsulfanyl)-alpha-D-ribose 1-phosphate = 5-(methylsulfanyl)-D-ribulose 1-phosphate. The protein operates within amino-acid biosynthesis; L-methionine biosynthesis via salvage pathway; L-methionine from S-methyl-5-thio-alpha-D-ribose 1-phosphate: step 1/6. Catalyzes the interconversion of methylthioribose-1-phosphate (MTR-1-P) into methylthioribulose-1-phosphate (MTRu-1-P). In Geotalea uraniireducens (strain Rf4) (Geobacter uraniireducens), this protein is Methylthioribose-1-phosphate isomerase.